A 165-amino-acid polypeptide reads, in one-letter code: GTP-dependent dephospho-CoA kinase (165 aa).

GTP contacts are provided by Asp44, Val45, Asp63, Lys65, Glu115, and Asp138.

It belongs to the GTP-dependent DPCK family.

It carries out the reaction 3'-dephospho-CoA + GTP = GDP + CoA + H(+). The protein operates within cofactor biosynthesis; coenzyme A biosynthesis. In terms of biological role, catalyzes the GTP-dependent phosphorylation of the 3'-hydroxyl group of dephosphocoenzyme A to form coenzyme A (CoA). This is GTP-dependent dephospho-CoA kinase from Picrophilus torridus (strain ATCC 700027 / DSM 9790 / JCM 10055 / NBRC 100828 / KAW 2/3).